Here is a 300-residue protein sequence, read N- to C-terminus: GTPase Era (300 aa).

In terms of domain architecture, Era-type G spans 6–173 (KSGFLSIIGR…VDVLKEHLPE (168 aa)). The segment at 14-21 (GRPNVGKS) is G1. 14–21 (GRPNVGKS) contacts GTP. A G2 region spans residues 40–44 (QTTRN). The interval 61-64 (DTPG) is G3. Residues 61 to 65 (DTPGI) and 123 to 126 (NKID) each bind GTP. The G4 stretch occupies residues 123–126 (NKID). A G5 region spans residues 152–154 (ISA). Residues 204 to 281 (TKEEVPHSIA…YLELWIKVKK (78 aa)) form the KH type-2 domain.

It belongs to the TRAFAC class TrmE-Era-EngA-EngB-Septin-like GTPase superfamily. Era GTPase family. Monomer.

The protein localises to the cytoplasm. The protein resides in the cell membrane. Functionally, an essential GTPase that binds both GDP and GTP, with rapid nucleotide exchange. Plays a role in 16S rRNA processing and 30S ribosomal subunit biogenesis and possibly also in cell cycle regulation and energy metabolism. This is GTPase Era from Oceanobacillus iheyensis (strain DSM 14371 / CIP 107618 / JCM 11309 / KCTC 3954 / HTE831).